Here is a 199-residue protein sequence, read N- to C-terminus: Urease accessory protein UreG (199 aa).

Gly8 to Thr15 is a GTP binding site.

This sequence belongs to the SIMIBI class G3E GTPase family. UreG subfamily. As to quaternary structure, homodimer. UreH, UreF and UreG form a complex that acts as a GTP-hydrolysis-dependent molecular chaperone, activating the urease apoprotein by helping to assemble the nickel containing metallocenter of UreC. The UreE protein probably delivers the nickel.

Its subcellular location is the cytoplasm. Facilitates the functional incorporation of the urease nickel metallocenter. This process requires GTP hydrolysis, probably effectuated by UreG. The chain is Urease accessory protein UreG from Helicobacter acinonychis (strain Sheeba).